The sequence spans 173 residues: Transcriptional repressor NrdR (173 aa).

A zinc finger lies at 3–34 (CPFCQHADTRVIDSRVSEDGATIRRRRECEAC). The ATP-cone domain occupies 49-139 (PAIVKSDGTR…VYRSFEDVAD (91 aa)).

This sequence belongs to the NrdR family. The cofactor is Zn(2+).

Functionally, negatively regulates transcription of bacterial ribonucleotide reductase nrd genes and operons by binding to NrdR-boxes. The protein is Transcriptional repressor NrdR of Stenotrophomonas maltophilia (strain R551-3).